We begin with the raw amino-acid sequence, 229 residues long: UPF0758 protein MA_1979 (229 aa).

The MPN domain occupies 106-228 (KICSPKDVYA…YVSLKDEGFV (123 aa)). Residues H177, H179, and D190 each coordinate Zn(2+). A JAMM motif motif is present at residues 177-190 (HNHPSGDPSPSRED).

Belongs to the UPF0758 family.

The polypeptide is UPF0758 protein MA_1979 (Methanosarcina acetivorans (strain ATCC 35395 / DSM 2834 / JCM 12185 / C2A)).